Here is a 412-residue protein sequence, read N- to C-terminus: Putative competence-damage inducible protein (412 aa).

Belongs to the CinA family.

The protein is Putative competence-damage inducible protein of Bacillus cereus (strain AH820).